The following is a 353-amino-acid chain: Photosystem II protein D1 (353 aa).

T2 is subject to N-acetylthreonine. A Phosphothreonine modification is found at T2. 3 helical membrane-spanning segments follow: residues 29–46 (YIGWFGVLMIPTLLTATS), 118–133 (HFLLGVACYMGREWEL), and 142–156 (WIAVAYSAPVAAATA). H118 is a chlorophyll a binding site. Y126 lines the pheophytin a pocket. The [CaMn4O5] cluster site is built by D170 and E189. A helical transmembrane segment spans residues 197–218 (FHMLGVAGVFGGSLFSAMHGSL). Chlorophyll a is bound at residue H198. A quinone is bound by residues H215 and 264–265 (SF). Fe cation is bound at residue H215. Position 272 (H272) interacts with Fe cation. Residues 274–288 (FLAAWPVVGIWFTAL) form a helical membrane-spanning segment. Residues H332, E333, D342, and A344 each contribute to the [CaMn4O5] cluster site. The propeptide occupies 345–353 (AIEAPSTNG).

The protein belongs to the reaction center PufL/M/PsbA/D family. PSII is composed of 1 copy each of membrane proteins PsbA, PsbB, PsbC, PsbD, PsbE, PsbF, PsbH, PsbI, PsbJ, PsbK, PsbL, PsbM, PsbT, PsbX, PsbY, PsbZ, Psb30/Ycf12, at least 3 peripheral proteins of the oxygen-evolving complex and a large number of cofactors. It forms dimeric complexes. The D1/D2 heterodimer binds P680, chlorophylls that are the primary electron donor of PSII, and subsequent electron acceptors. It shares a non-heme iron and each subunit binds pheophytin, quinone, additional chlorophylls, carotenoids and lipids. D1 provides most of the ligands for the Mn4-Ca-O5 cluster of the oxygen-evolving complex (OEC). There is also a Cl(-1) ion associated with D1 and D2, which is required for oxygen evolution. The PSII complex binds additional chlorophylls, carotenoids and specific lipids. serves as cofactor. Post-translationally, tyr-161 forms a radical intermediate that is referred to as redox-active TyrZ, YZ or Y-Z. C-terminally processed by CTPA; processing is essential to allow assembly of the oxygen-evolving complex and thus photosynthetic growth.

It is found in the plastid. Its subcellular location is the chloroplast thylakoid membrane. It carries out the reaction 2 a plastoquinone + 4 hnu + 2 H2O = 2 a plastoquinol + O2. Its function is as follows. Photosystem II (PSII) is a light-driven water:plastoquinone oxidoreductase that uses light energy to abstract electrons from H(2)O, generating O(2) and a proton gradient subsequently used for ATP formation. It consists of a core antenna complex that captures photons, and an electron transfer chain that converts photonic excitation into a charge separation. The D1/D2 (PsbA/PsbD) reaction center heterodimer binds P680, the primary electron donor of PSII as well as several subsequent electron acceptors. This chain is Photosystem II protein D1, found in Gossypium barbadense (Sea Island cotton).